Here is an 89-residue protein sequence, read N- to C-terminus: Small ribosomal subunit protein uS14A (89 aa).

It belongs to the universal ribosomal protein uS14 family. In terms of assembly, part of the 30S ribosomal subunit. Contacts proteins S3 and S10.

Binds 16S rRNA, required for the assembly of 30S particles and may also be responsible for determining the conformation of the 16S rRNA at the A site. This is Small ribosomal subunit protein uS14A from Lacticaseibacillus paracasei (strain ATCC 334 / BCRC 17002 / CCUG 31169 / CIP 107868 / KCTC 3260 / NRRL B-441) (Lactobacillus paracasei).